Here is a 797-residue protein sequence, read N- to C-terminus: Xaa-Pro dipeptidyl-peptidase (797 aa).

Catalysis depends on charge relay system residues serine 370, aspartate 490, and histidine 521.

This sequence belongs to the peptidase S15 family. Homodimer.

The protein localises to the cytoplasm. The catalysed reaction is Hydrolyzes Xaa-Pro-|- bonds to release unblocked, N-terminal dipeptides from substrates including Ala-Pro-|-p-nitroanilide and (sequentially) Tyr-Pro-|-Phe-Pro-|-Gly-Pro-|-Ile.. Removes N-terminal dipeptides sequentially from polypeptides having unsubstituted N-termini provided that the penultimate residue is proline. The protein is Xaa-Pro dipeptidyl-peptidase of Lacticaseibacillus rhamnosus (Lactobacillus rhamnosus).